Here is a 330-residue protein sequence, read N- to C-terminus: Probable allantoicase (330 aa).

Belongs to the allantoicase family.

The catalysed reaction is allantoate + H2O = (S)-ureidoglycolate + urea. Its pathway is nitrogen metabolism; (S)-allantoin degradation; (S)-ureidoglycolate from allantoate (aminidohydrolase route): step 1/1. The sequence is that of Probable allantoicase from Photobacterium profundum (strain SS9).